Reading from the N-terminus, the 837-residue chain is Tuftelin-interacting protein 11 (837 aa).

Basic and acidic residues predominate over residues 1 to 13 (MSLSHLYRDGEGH). Disordered regions lie at residues 1 to 31 (MSLSHLYRDGEGHMDDDEDERENFEITDWDL), 54 to 73 (WAERDSDEERPSFGGKRARD), and 85 to 136 (LKKG…AGGT). The required for interaction with DHX15 stretch occupies residues 1-50 (MSLSHLYRDGEGHMDDDEDERENFEITDWDLQNEFNPNRQRHWQTKEEAT). Position 2 is a phosphoserine (S2). Residues 14-28 (MDDDEDERENFEITD) are compositionally biased toward acidic residues. Over residues 54 to 64 (WAERDSDEERP) the composition is skewed to basic and acidic residues. Phosphoserine occurs at positions 59 and 98. Acidic residues predominate over residues 91 to 102 (EEAELEDSDDEE). The span at 103–116 (KPVKQDEFPKDFGP) shows a compositional bias: basic and acidic residues. S144 bears the Phosphoserine mark. Positions 149-195 (TKGIGQKLLQKMGYVPGRGLGKNAQGIINPIEAKQRKGKGAVGAYGS) constitute a G-patch domain. 2 disordered regions span residues 183-236 (QRKG…KKKP) and 287-313 (HKHSVPDDGLPPQAQPPPPPGKEARAP). S210 carries the post-translational modification Phosphoserine. Residues 217 to 231 (EFQKELSQWRKDPSG) are compositionally biased toward basic and acidic residues. Residues 700–705 (VKDKFN) carry the Nuclear localization signal motif. The interval 710-734 (IMNRAVSSNVGAYMQPGAREHIAYL) is required for nuclear speckle localization.

The protein belongs to the TFP11/STIP family. Identified in the spliceosome C complex. Found in the Intron Large (IL) complex, a post-mRNA release spliceosomal complex containing the excised intron, U2, U5 and U6 snRNPs, and splicing factors. Interacts with TUFT1. Interacts with DHX15; indicative for a recruitment of DHX15 to the IL complex. Interacts with GCFC2.

It localises to the cytoplasm. It is found in the nucleus. Involved in pre-mRNA splicing, specifically in spliceosome disassembly during late-stage splicing events. Intron turnover seems to proceed through reactions in two lariat-intron associated complexes termed Intron Large (IL) and Intron Small (IS). In cooperation with DHX15 seems to mediate the transition of the U2, U5 and U6 snRNP-containing IL complex to the snRNP-free IS complex leading to efficient debranching and turnover of excised introns. May play a role in the differentiation of ameloblasts and odontoblasts or in the forming of the enamel extracellular matrix. This Bos taurus (Bovine) protein is Tuftelin-interacting protein 11 (TFIP11).